The primary structure comprises 480 residues: Chromosomal replication initiator protein DnaA (480 aa).

Residues 1 to 71 (MKEFWQTCVS…EALAAEWYQR (71 aa)) form a domain I, interacts with DnaA modulators region. The domain II stretch occupies residues 71 to 142 (RPVQVTFELP…DAANIVYERS (72 aa)). The domain III, AAA+ region stretch occupies residues 143–359 (RLNTDLTFEN…GALRKVLAYA (217 aa)). ATP-binding residues include Gly187, Gly189, Lys190, and Thr191. Positions 360–480 (RFHGRDVLTV…LHVLEQTLKG (121 aa)) are domain IV, binds dsDNA.

It belongs to the DnaA family. Oligomerizes as a right-handed, spiral filament on DNA at oriC.

It localises to the cytoplasm. Functionally, plays an essential role in the initiation and regulation of chromosomal replication. ATP-DnaA binds to the origin of replication (oriC) to initiate formation of the DNA replication initiation complex once per cell cycle. Binds the DnaA box (a 9 base pair repeat at the origin) and separates the double-stranded (ds)DNA. Forms a right-handed helical filament on oriC DNA; dsDNA binds to the exterior of the filament while single-stranded (ss)DNA is stabiized in the filament's interior. The ATP-DnaA-oriC complex binds and stabilizes one strand of the AT-rich DNA unwinding element (DUE), permitting loading of DNA polymerase. After initiation quickly degrades to an ADP-DnaA complex that is not apt for DNA replication. Binds acidic phospholipids. The protein is Chromosomal replication initiator protein DnaA of Bordetella bronchiseptica (strain ATCC BAA-588 / NCTC 13252 / RB50) (Alcaligenes bronchisepticus).